Here is a 633-residue protein sequence, read N- to C-terminus: Guanylate-binding protein 6 (633 aa).

The segment at 1-310 (MESGPKMLAP…EAINSGAVPC (310 aa)) is GTPase domain (Globular). The 243-residue stretch at 35–277 (SQPVVVVAIV…FCSYIFTHAR (243 aa)) folds into the GB1/RHD3-type G domain. GTP contacts are provided by residues 45–52 (GLYRTGKS), 67–69 (LGS), and 97–101 (DTEGL).

Belongs to the TRAFAC class dynamin-like GTPase superfamily. GB1/RHD3 GTPase family. GB1 subfamily. In terms of processing, (Microbial infection) Ubiquitinated by S.flexneri IpaH9.8, leading to its degradation by the proteasome, thereby preventing its ability to promote host defense against bacterial infection.

Its subcellular location is the cytoplasmic vesicle. It carries out the reaction GTP + H2O = GDP + phosphate + H(+). Its function is as follows. Interferon (IFN)-inducible GTPase that plays important roles in innate immunity against a diverse range of bacterial, viral and protozoan pathogens, such as bacterial pathogens Listeria monocytogenes and Mycobacterium bovis BCG as well as the protozoan pathogen Toxoplasma gondii. Confers protection to several pathogens, including the bacterial pathogens Listeria monocytogenes and Mycobacterium bovis BCG as well as the protozoan pathogen Toxoplasma gondii. The chain is Guanylate-binding protein 6 (GBP6) from Homo sapiens (Human).